Here is a 506-residue protein sequence, read N- to C-terminus: Sodium-coupled neutral amino acid symporter 2 (506 aa).

Residues 1–23 (MKKAEMGRFSISPDEDSSSYSSN) are disordered. The Cytoplasmic portion of the chain corresponds to 1–76 (MKKAEMGRFS…HPGTTSFGMS (76 aa)). The interval 1–96 (MKKAEMGRFS…SGILGLSYAM (96 aa)) is regulates protein turnover upon amino acid deprivation. Serine 10, serine 12, serine 21, serine 22, and serine 55 each carry phosphoserine. A helical transmembrane segment spans residues 77-96 (VFNLSNAIVGSGILGLSYAM). Asparagine 82 lines the Na(+) pocket. Over 97-102 (ANTGIA) the chain is Extracellular. A helical membrane pass occupies residues 103-123 (LFIILLTFVSIFSLYSVHLLL). The Cytoplasmic portion of the chain corresponds to 124–158 (KTANEGGSLLYEQLGYKAFGLVGKLAASGSITMQN). Residues 159-177 (IGAMSSYLFIVKYELPLVI) form a helical membrane-spanning segment. Residues 178–188 (QALTNIEDKTG) are Extracellular-facing. A helical transmembrane segment spans residues 189–209 (LWYLNGNYLVLLVSLVVILPL). Over 210–217 (SLFRNLGY) the chain is Cytoplasmic. Residues 218 to 238 (LGYTSGLSLLCMVFFLIVVIC) traverse the membrane as a helical segment. Over 239–292 (KKFQVPCPVEAALIINETINTTLTQPTALVPALSHNVTENDSCRPHYFIFNSQT) the chain is Extracellular. A disulfide bridge links cysteine 245 with cysteine 281. N-linked (GlcNAc...) asparagine glycosylation is found at asparagine 258 and asparagine 274. A helical membrane pass occupies residues 293–313 (VYAVPILIFSFVCHPAVLPIY). Over 314 to 329 (EELKDRSRRRMMNVSK) the chain is Cytoplasmic. Residues 330–350 (ISFFAMFLMYLLAALFGYLTF) form a helical membrane-spanning segment. Residues 351-371 (YEHVESELLHTYSSILGTDIL) lie on the Extracellular side of the membrane. A helical membrane pass occupies residues 372-392 (LLIVRLAVLMAVTLTVPVVIF). Residue threonine 386 participates in Na(+) binding. Residues 393 to 413 (PIRSSVTHLLCASKDFSWWRH) are Cytoplasmic-facing. Residues 414–434 (SLITVSILAFTNLLVIFVPTI) traverse the membrane as a helical segment. The Extracellular portion of the chain corresponds to 435 to 436 (RD). Residues 437–457 (IFGFIGASAASMLIFILPSAF) form a helical membrane-spanning segment. Residues 458-472 (YIKLVKKEPMKSVQK) are Cytoplasmic-facing. The chain crosses the membrane as a helical span at residues 473 to 495 (IGALFFLLSGVLVMTGSMALIVL). Residues 496 to 506 (DWVHNAPGGGH) lie on the Extracellular side of the membrane.

This sequence belongs to the amino acid/polyamine transporter 2 family. Polyubiquitination by NEDD4L regulates the degradation and the activity of SLC38A2. In terms of tissue distribution, ubiquitously expressed. Expressed in neocortex. Widely expressed in the central nervous system with higher concentrations in caudal regions. Expressed by glutamatergic and GABAergic neurons together with astrocytes and other non-neuronal cells in the cerebral cortex (at protein level).

It is found in the cell membrane. It catalyses the reaction L-alanine(in) + Na(+)(in) = L-alanine(out) + Na(+)(out). The enzyme catalyses glycine(in) + Na(+)(in) = glycine(out) + Na(+)(out). It carries out the reaction L-serine(in) + Na(+)(in) = L-serine(out) + Na(+)(out). The catalysed reaction is L-proline(in) + Na(+)(in) = L-proline(out) + Na(+)(out). It catalyses the reaction L-methionine(in) + Na(+)(in) = L-methionine(out) + Na(+)(out). The enzyme catalyses L-histidine(in) + Na(+)(in) = L-histidine(out) + Na(+)(out). It carries out the reaction L-asparagine(in) + Na(+)(in) = L-asparagine(out) + Na(+)(out). The catalysed reaction is L-glutamine(in) + Na(+)(in) = L-glutamine(out) + Na(+)(out). It catalyses the reaction L-threonine(in) + Na(+)(in) = L-threonine(out) + Na(+)(out). The enzyme catalyses L-leucine(in) + Na(+)(in) = L-leucine(out) + Na(+)(out). It carries out the reaction L-phenylalanine(in) + Na(+)(in) = L-phenylalanine(out) + Na(+)(out). Inhibited by N-methyl-D-glucamine. Inhibited by choline. Allosteric regulation of sodium ions binding by pH. Its function is as follows. Symporter that cotransports neutral amino acids and sodium ions from the extracellular to the intracellular side of the cell membrane. The transport is pH-sensitive, Li(+)-intolerant, electrogenic, driven by the Na(+) electrochemical gradient and cotransports of neutral amino acids and sodium ions with a stoichiometry of 1:1. May function in the transport of amino acids at the blood-brain barrier. May function in the transport of amino acids in the supply of maternal nutrients to the fetus through the placenta. Maintains a key metabolic glutamine/glutamate balance underpinning retrograde signaling by dendritic release of the neurotransmitter glutamate. Transports L-proline in differentiating osteoblasts for the efficient synthesis of proline-enriched proteins and provides proline essential for osteoblast differentiation and bone formation during bone development. The protein is Sodium-coupled neutral amino acid symporter 2 of Homo sapiens (Human).